Consider the following 166-residue polypeptide: AP-3 complex subunit sigma (166 aa).

Belongs to the adaptor complexes small subunit family. Adaptor protein complex 3 (AP-3) is a heterotetramer composed of two large adaptins (delta-type subunit and beta-type subunit), a medium adaptin (mu-type subunit) and a small adaptin (sigma-type subunit).

Its subcellular location is the cytoplasm. The protein resides in the golgi apparatus. It is found in the cytoplasmic vesicle membrane. Functionally, part of the AP-3 complex, an adaptor-related complex which seems to be clathrin-associated. The complex is associated with the Golgi region as well as more peripheral structures. It facilitates the budding of vesicles from the Golgi membrane and may be directly involved in trafficking to the vacuole. It also function in maintaining the identity of lytic vacuoles and in regulating the transition between storage and lytic vacuoles. This is AP-3 complex subunit sigma from Arabidopsis thaliana (Mouse-ear cress).